The sequence spans 337 residues: Heme A synthase (337 aa).

A run of 5 helical transmembrane segments spans residues 6 to 26, 87 to 107, 119 to 139, 154 to 174, and 192 to 212; these read ITKWLCISCIMVIATIVIGGI, FIHRLLGRITALIYIVPLIYF, LPYIIALWLFCVQGFMGWYMV, LAFHLIIAVIIYHILFYQLIK, and LIFSGIAITVVYVQIFLGALV. A heme-binding site is contributed by His256. Helical transmembrane passes span 258–278, 285–305, and 308–328; these read LGGYSVFLVVVVLIICLLKIE, IAYFLMIALLMQVSTGIITLL, and VPIIIASIHQLFAVILLSIII. Heme is bound at residue His316.

It belongs to the COX15/CtaA family. Type 2 subfamily. In terms of assembly, interacts with CtaB. Heme b is required as a cofactor.

It is found in the cell membrane. It catalyses the reaction Fe(II)-heme o + 2 A + H2O = Fe(II)-heme a + 2 AH2. The protein operates within porphyrin-containing compound metabolism; heme A biosynthesis; heme A from heme O: step 1/1. Catalyzes the conversion of heme O to heme A by two successive hydroxylations of the methyl group at C8. The first hydroxylation forms heme I, the second hydroxylation results in an unstable dihydroxymethyl group, which spontaneously dehydrates, resulting in the formyl group of heme A. This chain is Heme A synthase, found in Rickettsia massiliae (strain Mtu5).